The chain runs to 67 residues: Preprofallaxidin-1 (67 aa).

The signal sequence occupies residues 1 to 22 (MASLKKSLFLVLFLGMVSLSIC). Positions 23–46 (DKEKREGENEEEEEEHEEESEEKR) are excised as a propeptide. The segment at 24–46 (KEKREGENEEEEEEHEEESEEKR) is disordered. Residues 30–42 (ENEEEEEEHEEES) are compositionally biased toward acidic residues.

Expressed by the skin glands.

The protein resides in the secreted. In terms of biological role, fallaxidin-4.1 shows antibacterial activity against the Gram-positive bacteria L.lactis (MIC=12 uM), M.luteus (MIC=100 uM), S.epidermidis (MIC=100 uM) and S.uberis (MIC=50 uM). No antibacterial activity against the Gram-positive bacteria B.cereus, E.faecalis, L.innocua, S.aureus, or the Gram-negative bacteria E.cloacae and E.coli. Inhibits the formation of NO by neuronal nitric oxide synthase with an IC(50) of 13.3 uM. This is Preprofallaxidin-1 from Litoria fallax (Eastern dwarf tree frog).